Reading from the N-terminus, the 273-residue chain is 2,3,4,5-tetrahydropyridine-2,6-dicarboxylate N-succinyltransferase (273 aa).

Substrate-binding residues include Arg104 and Asp141.

This sequence belongs to the transferase hexapeptide repeat family. In terms of assembly, homotrimer.

It localises to the cytoplasm. It catalyses the reaction (S)-2,3,4,5-tetrahydrodipicolinate + succinyl-CoA + H2O = (S)-2-succinylamino-6-oxoheptanedioate + CoA. It functions in the pathway amino-acid biosynthesis; L-lysine biosynthesis via DAP pathway; LL-2,6-diaminopimelate from (S)-tetrahydrodipicolinate (succinylase route): step 1/3. In Chromobacterium violaceum (strain ATCC 12472 / DSM 30191 / JCM 1249 / CCUG 213 / NBRC 12614 / NCIMB 9131 / NCTC 9757 / MK), this protein is 2,3,4,5-tetrahydropyridine-2,6-dicarboxylate N-succinyltransferase.